Reading from the N-terminus, the 101-residue chain is Small ribosomal subunit protein uS14 (101 aa).

Residues 33–69 (SQDASYEEKIDASTKLQKLPRDSSPSRHRNRCELSGR) are disordered. Residues 51–68 (LPRDSSPSRHRNRCELSG) are compositionally biased toward basic and acidic residues.

Belongs to the universal ribosomal protein uS14 family. As to quaternary structure, part of the 30S ribosomal subunit. Contacts proteins S3 and S10.

Its function is as follows. Binds 16S rRNA, required for the assembly of 30S particles and may also be responsible for determining the conformation of the 16S rRNA at the A site. The polypeptide is Small ribosomal subunit protein uS14 (Xanthomonas axonopodis pv. citri (strain 306)).